The following is a 780-amino-acid chain: Semaphorin-3G (780 aa).

An N-terminal signal peptide occupies residues 1–22; it reads MDPSAWAICCLLGSLLFHVGIP. Residues 32–519 enclose the Sema domain; sequence RLRLSYRDLL…SPLGVARLQL (488 aa). N-linked (GlcNAc...) asparagine glycosylation is present at asparagine 44. Cysteine 105 and cysteine 116 are disulfide-bonded. N-linked (GlcNAc...) asparagine glycosylation occurs at asparagine 127. Intrachain disulfides connect cysteine 134–cysteine 143, cysteine 270–cysteine 382, cysteine 294–cysteine 342, cysteine 522–cysteine 540, and cysteine 603–cysteine 655. An Ig-like C2-type domain is found at 569 to 671; the sequence is PAVQCLGQGQ…FSQTVVRFAL (103 aa). An N-linked (GlcNAc...) asparagine glycan is attached at asparagine 652.

The protein belongs to the semaphorin family. As to expression, highly expressed in lung and kidney. Weakly expressed in brain.

The protein resides in the secreted. Its function is as follows. Has chemorepulsive activities for sympathetic axons. Ligand of NRP2. The protein is Semaphorin-3G (Sema3g) of Mus musculus (Mouse).